Consider the following 243-residue polypeptide: Complement C1q tumor necrosis factor-related protein 5 (243 aa).

An N-terminal signal peptide occupies residues 1–15; sequence MRPLLVLLLLGLAAG. The tract at residues 15-125 is disordered; the sequence is GSPPLDDNKI…PPPSDAPLPF (111 aa). The 66-residue stretch at 30-95 folds into the Collagen-like domain; sequence GHPGLPGTPG…AGPAGPTGPA (66 aa). The segment covering 83-96 has biased composition (low complexity); the sequence is RGEAGPAGPTGPAG. The 140-residue stretch at 99–238 folds into the C1q domain; it reads SVPPRSAFSA…GFLVYSDWHS (140 aa).

As to quaternary structure, may interact with ERFE. Homotrimer (via collagen-like domain). May form higher order oligomers by supercoiling of the trimers.

The protein resides in the secreted. This chain is Complement C1q tumor necrosis factor-related protein 5 (C1QTNF5), found in Homo sapiens (Human).